A 408-amino-acid chain; its full sequence is Glutamate N-acetyltransferase (408 aa).

Positions 150, 176, 189, 271, 403, and 408 each coordinate substrate. Thr-189 (nucleophile) is an active-site residue.

This sequence belongs to the ArgJ family. In terms of assembly, heterotetramer of two alpha and two beta chains.

It is found in the cytoplasm. The enzyme catalyses N(2)-acetyl-L-ornithine + L-glutamate = N-acetyl-L-glutamate + L-ornithine. It participates in amino-acid biosynthesis; L-arginine biosynthesis; L-ornithine and N-acetyl-L-glutamate from L-glutamate and N(2)-acetyl-L-ornithine (cyclic): step 1/1. In terms of biological role, catalyzes the transfer of the acetyl group from N(2)-acetylornithine to glutamate, forming N-acetylglutamate and L-ornithine. The chain is Glutamate N-acetyltransferase from Methanococcus maripaludis (strain DSM 14266 / JCM 13030 / NBRC 101832 / S2 / LL).